Here is a 348-residue protein sequence, read N- to C-terminus: Rhodopsin (348 aa).

Over 1–33 (TEGPFFYIPMVNTSGVVRSPYEYPQYYLVNPAA) the chain is Extracellular. N-linked (GlcNAc...) asparagine glycosylation is present at Asn-12. The chain crosses the membrane as a helical span at residues 34 to 58 (YAILGAYMFFLIIIGFPVNFMTLYV). Topologically, residues 59–70 (TLEHKKLRTPLN) are cytoplasmic. Residues 71 to 93 (YILLNLAVADLFMVIGGFTTTMY) traverse the membrane as a helical segment. The Extracellular portion of the chain corresponds to 94–107 (SSMHGYFVLGRLGC). Cys-107 and Cys-184 are disulfide-bonded. Residues 108 to 130 (NMEGFSATLGGMISLWSLAVLAI) traverse the membrane as a helical segment. Positions 131 to 133 (ERW) match the 'Ionic lock' involved in activated form stabilization motif. The Cytoplasmic segment spans residues 131–149 (ERWVVVCKPISNFRFGENH). A helical membrane pass occupies residues 150 to 170 (AIMGVSLTWFMALACTVPPLV). The Extracellular portion of the chain corresponds to 171–199 (GWSRYIPEGMQCSCGIDYYTRAEGFNNES). Residue Asn-197 is glycosylated (N-linked (GlcNAc...) asparagine). Residues 200–221 (FVLYMFFCHFLVPLVIIFFCYG) traverse the membrane as a helical segment. Residues 222–249 (RLLCAVKEAAAAQQESETTQRAEREVTR) lie on the Cytoplasmic side of the membrane. The chain crosses the membrane as a helical span at residues 250-271 (MVIIMVIGFLVCWLPYASVAWF). Topologically, residues 272–283 (IFTHQGSEFGPL) are extracellular. Residues 284–305 (FMTIPAFFAKSSSIYNPMIYIC) form a helical membrane-spanning segment. Residue Lys-293 is modified to N6-(retinylidene)lysine. Over 306 to 348 (MNKQFRNCMITTLFCGKNPFEGEEEGASSTKTEASSASSVSPA) the chain is Cytoplasmic. Cys-320 is lipidated: S-palmitoyl cysteine. The segment at 327-348 (GEEEGASSTKTEASSASSVSPA) is disordered. The segment covering 332-348 (ASSTKTEASSASSVSPA) has biased composition (low complexity).

It belongs to the G-protein coupled receptor 1 family. Opsin subfamily. In terms of processing, phosphorylated on some or all of the serine and threonine residues present in the C-terminal region. Contains one covalently linked retinal chromophore.

Its subcellular location is the membrane. The protein resides in the cell projection. The protein localises to the cilium. It is found in the photoreceptor outer segment. In terms of biological role, photoreceptor required for image-forming vision at low light intensity. While most salt water fish species use retinal as chromophore, most freshwater fish use 3-dehydroretinal, or a mixture of retinal and 3-dehydroretinal. Light-induced isomerization of 11-cis to all-trans retinal triggers a conformational change that activates signaling via G-proteins. Subsequent receptor phosphorylation mediates displacement of the bound G-protein alpha subunit by arrestin and terminates signaling. The protein is Rhodopsin (rho) of Sargocentron punctatissimum (Speckled squirrelfish).